The primary structure comprises 1376 residues: Zinc finger MYM-type protein 2 (1376 aa).

The span at N30 to S53 shows a compositional bias: polar residues. Disordered regions lie at residues N30–D56 and T85–S158. Residues K48, K88, K98, and K104 each participate in a glycyl lysine isopeptide (Lys-Gly) (interchain with G-Cter in SUMO2) cross-link. The segment covering T127–F138 has biased composition (polar residues). A compositionally biased stretch (basic and acidic residues) spans I139 to D152. Residues K147, K253, and K297 each participate in a glycyl lysine isopeptide (Lys-Gly) (interchain with G-Cter in SUMO2) cross-link. Residues D269–L304 form a disordered region. The segment covering S284–D302 has biased composition (polar residues). Position 305 is a phosphoserine (S305). Glycyl lysine isopeptide (Lys-Gly) (interchain with G-Cter in SUMO2) cross-links involve residues K312, K324, K347, and K365. Residues V326–F362 form an MYM-type 1 zinc finger. The segment at P368–Y408 adopts an MYM-type 2 zinc-finger fold. Residues K416, K440, K490, K502, K512, K528, and K531 each participate in a glycyl lysine isopeptide (Lys-Gly) (interchain with G-Cter in SUMO2) cross-link. MYM-type zinc fingers lie at residues N420–Y455 and I462–Y501. The segment at L532–H569 adopts an MYM-type 5 zinc-finger fold. Glycyl lysine isopeptide (Lys-Gly) (interchain with G-Cter in SUMO2) cross-links involve residues K575, K602, K648, K657, K687, K699, and K708. The segment at Q635 to Y670 adopts an MYM-type 6 zinc-finger fold. 2 consecutive MYM-type zinc fingers follow at residues R722–F757 and K763–F798. Residues K763, K787, K811, and K828 each participate in a glycyl lysine isopeptide (Lys-Gly) (interchain with G-Cter in SUMO2) cross-link. Position 837 is a phosphoserine (S837). The disordered stretch occupies residues V1027–S1063. Basic residues predominate over residues P1038 to A1049. S1063 is subject to Phosphoserine. T1375 bears the Phosphothreonine mark.

In terms of assembly, can form homodimers. May be a component of a BHC histone deacetylase complex that contains HDAC1, HDAC2, HMG20B/BRAF35, KDM1A, RCOR1/CoREST, PHF21A/BHC80, ZMYM2, ZNF217, ZMYM3, GSE1 and GTF2I. Interacts with FOXP1 and FOXP2. Low but widespread expression is detected in the developing kidney.

The protein localises to the nucleus. Functionally, involved in the negative regulation of transcription. This Mus musculus (Mouse) protein is Zinc finger MYM-type protein 2 (Zmym2).